The sequence spans 2148 residues: Polyketide synthase 1 (2148 aa).

The interval 19-261 is N-terminal acylcarrier protein transacylase domain (SAT); that stretch reads FIFGDQSSCN…TPLAVHAPYH (243 aa). Positions 394–829 constitute a Ketosynthase family 3 (KS3) domain; that stretch reads ESKIAIIGMS…GGNTALLVED (436 aa). Residues C566, H701, and H745 each act as for beta-ketoacyl synthase activity in the active site. Positions 929 to 1233 are malonyl-CoA:ACP transacylase (MAT) domain; the sequence is AFVFSGQGSQ…PSLMRNKDGW (305 aa). S1018 acts as the For acyl/malonyl transferase activity in catalysis. Residues 1310-1624 form a product template (PT) domain region; the sequence is TASVHRIVHE…RKVLNTAMPP (315 aa). Positions 1314–1447 are N-terminal hotdog fold; that stretch reads HRIVHESVEK…SSLHFEQPKV (134 aa). The PKS/mFAS DH domain occupies 1314–1619; it reads HRIVHESVEK…FQGIPRKVLN (306 aa). H1346 acts as the Proton acceptor; for dehydratase activity in catalysis. The tract at residues 1474–1619 is C-terminal hotdog fold; that stretch reads LNSRMSSGVI…FQGIPRKVLN (146 aa). D1533 functions as the Proton donor; for dehydratase activity in the catalytic mechanism. Positions 1619–1655 are disordered; the sequence is NTAMPPPKSQNEAPVRSGPAKPAAKPPRSASSEHSGH. Residues 1634-1650 are compositionally biased toward low complexity; the sequence is RSGPAKPAAKPPRSASS. Positions 1678–1752 constitute a Carrier 1 domain; the sequence is RNPMLPVFKI…DLAAHLGLDT (75 aa). An O-(pantetheine 4'-phosphoryl)serine modification is found at S1712. Low complexity-rich tracts occupy residues 1757 to 1769 and 1779 to 1796; these read QSSG…GGLS and TSSV…SVSG. The interval 1757-1796 is disordered; that stretch reads QSSGQSSSFGGLSPRSDSIGEITSSVTTPPSLSPRSSVSG. In terms of domain architecture, Carrier 2 spans 1793–1870; sequence SVSGSQCKDV…SFKHMFQQGH (78 aa). S1830 is modified (O-(pantetheine 4'-phosphoryl)serine). A thioesterase (TE) domain region spans residues 1882–2146; that stretch reads LKQYRATSTL…ERVAAFIRST (265 aa). S1973 acts as the For thioesterase activity in catalysis.

Its function is as follows. Polyketide synthase; part of the Pks1 gene cluster that mediates the biosynthesis of an anthraquinone derivative pigment that contributes to conidial pigmentation that provides protection from UV radiation, heat and cold stress. The polyketide synthase Pks1 produces 1-acetyl-2,4,6,8-tetrahydroxy-9,10-anthraquinone though condensation of acetyl-CoA with malonyl-CoA. The dehydratase EthD and the laccase Mlac1 further convert the anthraquinone derivative into the final conidial pigment. The polypeptide is Polyketide synthase 1 (Metarhizium anisopliae (strain ARSEF 549)).